Consider the following 500-residue polypeptide: Probable cytosol aminopeptidase (500 aa).

Positions 264 and 269 each coordinate Mn(2+). Lys276 is a catalytic residue. 3 residues coordinate Mn(2+): Asp287, Asp346, and Glu348. Arg350 is a catalytic residue.

This sequence belongs to the peptidase M17 family. Requires Mn(2+) as cofactor.

Its subcellular location is the cytoplasm. The enzyme catalyses Release of an N-terminal amino acid, Xaa-|-Yaa-, in which Xaa is preferably Leu, but may be other amino acids including Pro although not Arg or Lys, and Yaa may be Pro. Amino acid amides and methyl esters are also readily hydrolyzed, but rates on arylamides are exceedingly low.. The catalysed reaction is Release of an N-terminal amino acid, preferentially leucine, but not glutamic or aspartic acids.. Functionally, presumably involved in the processing and regular turnover of intracellular proteins. Catalyzes the removal of unsubstituted N-terminal amino acids from various peptides. This chain is Probable cytosol aminopeptidase, found in Afipia carboxidovorans (strain ATCC 49405 / DSM 1227 / KCTC 32145 / OM5) (Oligotropha carboxidovorans).